A 179-amino-acid polypeptide reads, in one-letter code: Crossover junction endodeoxyribonuclease RuvC (179 aa).

Catalysis depends on residues Asp12, Glu72, and Asp144. Mg(2+)-binding residues include Asp12, Glu72, and Asp144.

The protein belongs to the RuvC family. In terms of assembly, homodimer which binds Holliday junction (HJ) DNA. The HJ becomes 2-fold symmetrical on binding to RuvC with unstacked arms; it has a different conformation from HJ DNA in complex with RuvA. In the full resolvosome a probable DNA-RuvA(4)-RuvB(12)-RuvC(2) complex forms which resolves the HJ. It depends on Mg(2+) as a cofactor.

The protein localises to the cytoplasm. It carries out the reaction Endonucleolytic cleavage at a junction such as a reciprocal single-stranded crossover between two homologous DNA duplexes (Holliday junction).. The RuvA-RuvB-RuvC complex processes Holliday junction (HJ) DNA during genetic recombination and DNA repair. Endonuclease that resolves HJ intermediates. Cleaves cruciform DNA by making single-stranded nicks across the HJ at symmetrical positions within the homologous arms, yielding a 5'-phosphate and a 3'-hydroxyl group; requires a central core of homology in the junction. The consensus cleavage sequence is 5'-(A/T)TT(C/G)-3'. Cleavage occurs on the 3'-side of the TT dinucleotide at the point of strand exchange. HJ branch migration catalyzed by RuvA-RuvB allows RuvC to scan DNA until it finds its consensus sequence, where it cleaves and resolves the cruciform DNA. The polypeptide is Crossover junction endodeoxyribonuclease RuvC (Dechloromonas aromatica (strain RCB)).